Reading from the N-terminus, the 303-residue chain is N-acetylmuramic acid 6-phosphate etherase (303 aa).

In terms of domain architecture, SIS spans 60–223 (ATASLQAGGR…STGVMVKLGK (164 aa)). The active-site Proton donor is glutamate 88. The active site involves glutamate 119.

This sequence belongs to the GCKR-like family. MurNAc-6-P etherase subfamily. As to quaternary structure, homodimer.

The catalysed reaction is N-acetyl-D-muramate 6-phosphate + H2O = N-acetyl-D-glucosamine 6-phosphate + (R)-lactate. Its pathway is amino-sugar metabolism; 1,6-anhydro-N-acetylmuramate degradation. It participates in amino-sugar metabolism; N-acetylmuramate degradation. The protein operates within cell wall biogenesis; peptidoglycan recycling. In terms of biological role, specifically catalyzes the cleavage of the D-lactyl ether substituent of MurNAc 6-phosphate, producing GlcNAc 6-phosphate and D-lactate. Together with AnmK, is also required for the utilization of anhydro-N-acetylmuramic acid (anhMurNAc) either imported from the medium or derived from its own cell wall murein, and thus plays a role in cell wall recycling. This chain is N-acetylmuramic acid 6-phosphate etherase, found in Pectobacterium atrosepticum (strain SCRI 1043 / ATCC BAA-672) (Erwinia carotovora subsp. atroseptica).